A 479-amino-acid chain; its full sequence is MAGTRWVLGALLRGCGCNCSSCRRTGAACLPFYSAAGTFPSGVSGRRRLLLLLGAAAAAASQTRGLQLGPAAAGRLAGPIPARPSAAAAAAASYSALRAPLFPRSLAAAAGPARGYSQESKTTYLEDLPPLPEYELSPSKLGDEVDDVYLIRAQGLPWSCTVEDVLNFFSDCRIRNSENGIHFLLNRDGKRRGDALIEMESEQDVQKALEKHRMYMGQRYVEVYEINNEDVDALMKSLQVKPSPVLSDGVVRLRGLPYSCNEKDIVDFFAGLNIVDITFVMDYRGRRKTGEAYVQFEEPEMANQALLKHREEIGNRYIEIFPSRRNEVRTHVGSHKGKKMTSSPPTKYITEPEVVFEEHEVNEDIRPMTAFESDKEIELPKEMSEKLPEAVDFGTLPSLHFVHMRGLPFQANAQDIINFFAPLKPVRITMEYSSSGKATGEADVHFDTHEDAVAAMLKDRSHVQHRYIELFLNSCPKGK.

Residues methionine 1 to tyrosine 116 constitute a mitochondrion transit peptide. 2 consecutive RRM domains span residues tyrosine 149 to valine 245 and glycine 249 to arginine 325. Serine 243 carries the post-translational modification Phosphoserine. Residue serine 334 is modified to Phosphoserine. An RRM 3 domain is found at histidine 400 to lysine 479.

Monomer. Found in a complex with DDX28, DHX30, FASTKD2 and FASTKD5. Interacts with the mitochondrial RNase P complex subunit TRMT10C/MRPP1. Interacts with the 2 components of the mitochondrial degradosome complex, PNPT1 and SUPV3L1, in an RNA-dependent manner.

Its subcellular location is the mitochondrion matrix. Its function is as follows. Regulator of post-transcriptional mitochondrial gene expression, required for assembly of the mitochondrial ribosome and for recruitment of mRNA and lncRNA. Binds RNAs containing the 14 base G-rich element. Preferentially binds RNAs transcribed from three contiguous genes on the light strand of mtDNA, the ND6 mRNA, and the long non-coding RNAs for MT-CYB and MT-ND5, each of which contains multiple consensus binding sequences. Involved in the degradosome-mediated decay of non-coding mitochondrial transcripts (MT-ncRNA) and tRNA-like molecules. Acts by unwinding G-quadruplex RNA structures in MT-ncRNA, thus facilitating their degradation by the degradosome. G-quadruplexes (G4) are non-canonical 4 stranded structures formed by transcripts from the light strand of mtDNA. The protein is G-rich sequence factor 1 (Grsf1) of Mus musculus (Mouse).